A 382-amino-acid polypeptide reads, in one-letter code: 2-carboxy-1,4-naphthoquinone phytyltransferase, chloroplastic (382 aa).

Residues 1–66 constitute a chloroplast transit peptide; it reads MVNFVSLCDI…RRNLRVRPIF (66 aa). 8 helical membrane-spanning segments follow: residues 99 to 119, 123 to 143, 168 to 188, 196 to 216, 224 to 244, 257 to 277, 323 to 343, and 361 to 381; these read VALVPLTVGASAAYLETGLFL, YVTLLLSSILIITWLNLSNDV, TLAAAITSLALGVSGLVWTSL, ILLLASAILCGYVYQCPPFRL, PLCFAAFGPFATTAFYLLLGS, VLSSSVLVGFTTSLILFCSHF, ILPLPCTLMCFLTLPVGNLVS, and YYCVRLHALLGAALSLGLVIA.

The protein belongs to the MenA family. Type 2 subfamily.

The protein resides in the plastid. Its subcellular location is the chloroplast membrane. It carries out the reaction 2-carboxy-1,4-naphthoquinone + phytyl diphosphate + H(+) = demethylphylloquinone + CO2 + diphosphate. Involved in the synthesis of phylloquinone (vitamin K1). Catalyzes the transfer of a prenyl chain to 2-carboxy-1,4-naphthoquinone. The sequence is that of 2-carboxy-1,4-naphthoquinone phytyltransferase, chloroplastic (ABC4) from Arabidopsis thaliana (Mouse-ear cress).